The sequence spans 914 residues: Solute carrier family 12 member 9 (914 aa).

At 1 to 36 (MASESSPLLAYRLLGEEGVALPANGAGGPGGASARK) the chain is on the cytoplasmic side. At Ser6 the chain carries Phosphoserine. A helical transmembrane segment spans residues 37–57 (LSTFLGVVVPTVLSMFSIVVF). Over 58 to 72 (LRIGFVVGHAGLLQA) the chain is Extracellular. A helical transmembrane segment spans residues 73–93 (LAMLLVAYFILALTVLSVCAI). Topologically, residues 94-119 (ATNGAVQGGGAYFMISRTLGPEVGGS) are cytoplasmic. Residues 120-140 (IGLMFYLANVCGCAVSLLGLV) traverse the membrane as a helical segment. The Extracellular portion of the chain corresponds to 141–167 (ESVLDVFGADATGPSGLRVLPQGYGWN). The helical transmembrane segment at 168–188 (LLYGSLLLGLVGGVCTLGAGL) threads the bilayer. Residues 189 to 193 (YARAS) are Cytoplasmic-facing. Residues 194–214 (FLTFLLVSGSLASVLISFVAV) form a helical membrane-spanning segment. The Extracellular segment spans residues 215–262 (GPRDIRLTPRPGPNGSSLPPRFGHFTGFNSSTLKDNLGAGYAEDYTTG). Asn228 and Asn243 each carry an N-linked (GlcNAc...) asparagine glycan. Residues 263-283 (AVMNFASVFAVLFNGCTGIMA) traverse the membrane as a helical segment. The Cytoplasmic portion of the chain corresponds to 284 to 297 (GANMSGELKDPSRA). Residues 298-318 (IPLGTIVAVAYTFFVYVLLFF) traverse the membrane as a helical segment. Topologically, residues 319 to 338 (LSSFTCDRTLLQEDYGFFRA) are extracellular. A helical membrane pass occupies residues 339–359 (ISLWPPLVLIGIYATALSASM). The Cytoplasmic segment spans residues 360-390 (SSLIGASRILHALARDDLFGVILAPAKVVSR). The chain crosses the membrane as a helical span at residues 391-411 (GGNPWAAVLYSWGLVQLVLLA). Over 412–416 (GKLNT) the chain is Extracellular. A helical transmembrane segment spans residues 417 to 437 (LAAVVTVFYLVAYAAVDLSCL). The Cytoplasmic segment spans residues 438–466 (SLEWASAPNFRPTFSLFSWHTCLLGVASC). Residues 467–487 (LLMMFLISPGAAGGSLLLMGL) traverse the membrane as a helical segment. Residues 488 to 740 (LAALLTARGG…LLRPRGGPGY (253 aa)) lie on the Extracellular side of the membrane. The tract at residues 642–678 (LTDPAFSEPADSTREGSSPALSTLFPPPRAPGSPRAL) is disordered. Residues 741-761 (VDVCGLFLLQMATILGMVPAW) traverse the membrane as a helical segment. The Cytoplasmic segment spans residues 762 to 914 (HSARLRIFLC…GVTPVTCTDL (153 aa)). The segment at 844-863 (QQGRGTGGGPGGPEGGDAEG) is disordered. Positions 847-858 (RGTGGGPGGPEG) are enriched in gly residues.

It belongs to the SLC12A transporter family. As to quaternary structure, interacts with SLC12A1. As to expression, highly expressed in placenta, brain and kidney. Lower expression in lung, liver and heart.

It localises to the cell membrane. Its subcellular location is the lysosome membrane. In terms of biological role, may be an inhibitor of SLC12A1. Seems to correspond to a subunit of a multimeric transport system and thus, additional subunits may be required for its function. May play a role in lysosomal ion flux and osmoregulation. This chain is Solute carrier family 12 member 9 (SLC12A9), found in Homo sapiens (Human).